Reading from the N-terminus, the 598-residue chain is Elongation factor 4 (598 aa).

The 183-residue stretch at 2–184 (KNIRNFSIIA…RLVKEIPAPE (183 aa)) folds into the tr-type G domain. GTP contacts are provided by residues 14 to 19 (DHGKST) and 131 to 134 (NKID).

Belongs to the TRAFAC class translation factor GTPase superfamily. Classic translation factor GTPase family. LepA subfamily.

It localises to the cell inner membrane. The catalysed reaction is GTP + H2O = GDP + phosphate + H(+). Functionally, required for accurate and efficient protein synthesis under certain stress conditions. May act as a fidelity factor of the translation reaction, by catalyzing a one-codon backward translocation of tRNAs on improperly translocated ribosomes. Back-translocation proceeds from a post-translocation (POST) complex to a pre-translocation (PRE) complex, thus giving elongation factor G a second chance to translocate the tRNAs correctly. Binds to ribosomes in a GTP-dependent manner. This is Elongation factor 4 from Proteus mirabilis (strain HI4320).